The following is a 1386-amino-acid chain: DNA-directed RNA polymerase subunit beta (1386 aa).

The protein belongs to the RNA polymerase beta chain family. As to quaternary structure, the RNAP catalytic core consists of 2 alpha, 1 beta, 1 beta' and 1 omega subunit. When a sigma factor is associated with the core the holoenzyme is formed, which can initiate transcription.

The catalysed reaction is RNA(n) + a ribonucleoside 5'-triphosphate = RNA(n+1) + diphosphate. Functionally, DNA-dependent RNA polymerase catalyzes the transcription of DNA into RNA using the four ribonucleoside triphosphates as substrates. The chain is DNA-directed RNA polymerase subunit beta from Nitratiruptor sp. (strain SB155-2).